Reading from the N-terminus, the 237-residue chain is Concanavalin-A (237 aa).

Mn(2+) is bound by residues Glu8 and Asp10. Residues Asp10, Tyr12, Asn14, and Asp19 each contribute to the Ca(2+) site. Asn14 serves as a coordination point for a carbohydrate. Residues Asp19 and His24 each coordinate Mn(2+). A carbohydrate contacts are provided by residues 98 to 100 (GLY), Asp208, and Arg228.

It belongs to the leguminous lectin family. As to quaternary structure, homotetramer. Post-translationally, concanavalin A-like lectins of the Diocleinae subtribe undergo proteolytic processing referred to as circular permutation. The propeptide is split into an N-terminal and a C-terminal part, the gamma and beta chain, respectively. These are then religated in beta-gamma order to form the mature alpha chain. The beta and gamma chains can often be detected in cell extracts. Residues 1-118 of the mature chain, as displayed here, probably constitute the beta chain in the propeptide, residues 119-237 the gamma chain.

Functionally, glucose/D-mannose specific lectin. This chain is Concanavalin-A, found in Canavalia cathartica (Jackbean).